We begin with the raw amino-acid sequence, 256 residues long: MAGERRPLMAANWKMNKTVREAQDYMAALLPRVADLAGEVDVAVFAPFTCLSEVARMAEGSGVLAGAQNFFYEDSGAYTGEVSAPMLLDVGARASIVGHSERRELFCETDESVARKARRAVEAGLLPVVCVGETEEERDAGRMWEKVSGQVRAVVEGLGDASGGRVVFAYEPIWAIGTGKTASPEDAQDAIGRIRGLLRELRGEGFAEEARLLYGGSIKPENISEIMAQKDVDGGLVGGASLEVGSFLQLVEAARG.

Residue 12 to 14 (NWK) coordinates substrate. The Electrophile role is filled by histidine 99. Glutamate 171 functions as the Proton acceptor in the catalytic mechanism. Substrate is bound by residues glycine 177, serine 217, and 238–239 (GG).

It belongs to the triosephosphate isomerase family. Homodimer.

Its subcellular location is the cytoplasm. The catalysed reaction is D-glyceraldehyde 3-phosphate = dihydroxyacetone phosphate. Its pathway is carbohydrate biosynthesis; gluconeogenesis. The protein operates within carbohydrate degradation; glycolysis; D-glyceraldehyde 3-phosphate from glycerone phosphate: step 1/1. Functionally, involved in the gluconeogenesis. Catalyzes stereospecifically the conversion of dihydroxyacetone phosphate (DHAP) to D-glyceraldehyde-3-phosphate (G3P). The protein is Triosephosphate isomerase of Rubrobacter xylanophilus (strain DSM 9941 / JCM 11954 / NBRC 16129 / PRD-1).